Reading from the N-terminus, the 73-residue chain is Translation initiation factor IF-1 (73 aa).

Residues 1–73 enclose the S1-like domain; that stretch reads MAKKEDTIVL…TKARVVYRHR (73 aa).

This sequence belongs to the IF-1 family. In terms of assembly, component of the 30S ribosomal translation pre-initiation complex which assembles on the 30S ribosome in the order IF-2 and IF-3, IF-1 and N-formylmethionyl-tRNA(fMet); mRNA recruitment can occur at any time during PIC assembly.

The protein resides in the cytoplasm. Its function is as follows. One of the essential components for the initiation of protein synthesis. Stabilizes the binding of IF-2 and IF-3 on the 30S subunit to which N-formylmethionyl-tRNA(fMet) subsequently binds. Helps modulate mRNA selection, yielding the 30S pre-initiation complex (PIC). Upon addition of the 50S ribosomal subunit IF-1, IF-2 and IF-3 are released leaving the mature 70S translation initiation complex. This Chlamydia abortus (strain DSM 27085 / S26/3) (Chlamydophila abortus) protein is Translation initiation factor IF-1.